Consider the following 1388-residue polypeptide: Retrotransposon Gag-like protein 9 (1388 aa).

Disordered stretches follow at residues 491 to 511 (ATAS…GAMS), 769 to 790 (TPLM…ASSS), 895 to 918 (GGVS…RRPS), 1100 to 1138 (TDSG…PKEV), and 1336 to 1388 (AMGN…HTNK). Over residues 1103 to 1123 (GEASTSHINITASGSKPTSHM) the composition is skewed to polar residues. Residues 1359–1374 (YLKEHGDPQEGLHDHL) are compositionally biased toward basic and acidic residues.

In Homo sapiens (Human), this protein is Retrotransposon Gag-like protein 9.